The sequence spans 749 residues: Subtilisin-like protease SBT4.14 (749 aa).

The first 28 residues, 1 to 28 (MIRSKCSCHHHLLVLVMVVLWISPRYAS), serve as a signal peptide directing secretion. The propeptide at 29-115 (AEDEHAKDFY…VSRNQYRKLH (87 aa)) is activation peptide. The Inhibitor I9 domain occupies 38–115 (YIIYLGDRPD…VSRNQYRKLH (78 aa)). In terms of domain architecture, Peptidase S8 spans 119–595 (SWDFVGLPLT…GGQINPRRAA (477 aa)). Asp-145 serves as the catalytic Charge relay system. N-linked (GlcNAc...) asparagine glycosylation occurs at Asn-176. The active-site Charge relay system is the His-210. N-linked (GlcNAc...) asparagine glycosylation is found at Asn-225, Asn-233, Asn-446, and Asn-458. Ser-536 functions as the Charge relay system in the catalytic mechanism. Asn-618 carries N-linked (GlcNAc...) asparagine glycosylation.

It belongs to the peptidase S8 family. The C-terminal propeptide is autocleaved. Expressed only in roots, particularly in xylem.

The polypeptide is Subtilisin-like protease SBT4.14 (Arabidopsis thaliana (Mouse-ear cress)).